Reading from the N-terminus, the 267-residue chain is MRAFRIAYDGTGFRGFQRQPHGETVENALFEALSSLGVAFEDGRPPGYAAAGRTDAGVSARAQTVAFEAPAWLLPRALNGELPASVRAWAAADVGDAFHATHDATARAYRYFLYAPEPSADTTRARAACARLSGSHDFHNFTPDDRGTERTLSMRLRRQGPFLVVDCRAGGFARQLVRRLVAAVAAVARGERPLSFLGRALDDDPLSGADGIAAAPPEPLLLADVVYPGVEFTVDDRAAESARTVFATRRRQRLADARVAGALSPPE.

Catalysis depends on D55, which acts as the Nucleophile. Y109 contacts substrate.

Belongs to the tRNA pseudouridine synthase TruA family.

The enzyme catalyses uridine(38/39/40) in tRNA = pseudouridine(38/39/40) in tRNA. In terms of biological role, formation of pseudouridine at positions 38, 39 and 40 in the anticodon stem and loop of transfer RNAs. This Natronomonas pharaonis (strain ATCC 35678 / DSM 2160 / CIP 103997 / JCM 8858 / NBRC 14720 / NCIMB 2260 / Gabara) (Halobacterium pharaonis) protein is tRNA pseudouridine synthase A.